The chain runs to 166 residues: Crossover junction endodeoxyribonuclease RuvC (166 aa).

Active-site residues include aspartate 7, glutamate 67, and aspartate 140. Mg(2+)-binding residues include aspartate 7, glutamate 67, and aspartate 140.

Belongs to the RuvC family. In terms of assembly, homodimer which binds Holliday junction (HJ) DNA. The HJ becomes 2-fold symmetrical on binding to RuvC with unstacked arms; it has a different conformation from HJ DNA in complex with RuvA. In the full resolvosome a probable DNA-RuvA(4)-RuvB(12)-RuvC(2) complex forms which resolves the HJ. Requires Mg(2+) as cofactor.

The protein localises to the cytoplasm. It catalyses the reaction Endonucleolytic cleavage at a junction such as a reciprocal single-stranded crossover between two homologous DNA duplexes (Holliday junction).. Its function is as follows. The RuvA-RuvB-RuvC complex processes Holliday junction (HJ) DNA during genetic recombination and DNA repair. Endonuclease that resolves HJ intermediates. Cleaves cruciform DNA by making single-stranded nicks across the HJ at symmetrical positions within the homologous arms, yielding a 5'-phosphate and a 3'-hydroxyl group; requires a central core of homology in the junction. The consensus cleavage sequence is 5'-(A/T)TT(C/G)-3'. Cleavage occurs on the 3'-side of the TT dinucleotide at the point of strand exchange. HJ branch migration catalyzed by RuvA-RuvB allows RuvC to scan DNA until it finds its consensus sequence, where it cleaves and resolves the cruciform DNA. In Ruminiclostridium cellulolyticum (strain ATCC 35319 / DSM 5812 / JCM 6584 / H10) (Clostridium cellulolyticum), this protein is Crossover junction endodeoxyribonuclease RuvC.